The chain runs to 323 residues: Protease Do-like 5, chloroplastic (323 aa).

A chloroplast-targeting transit peptide spans 1–28 (MTMALASSKAFSSIFNTLSPINQSKFVL). A thylakoid-targeting transit peptide spans 29 to 73 (ACSGSNHVDVIDRRRRIMIFGSSLALTSSLLGSNQQRLPMESAIA). Active-site charge relay system residues include histidine 147, aspartate 188, and serine 266. Positions 186–283 (DNDLAVLKIE…YGHTIGVNTA (98 aa)) are serine protease.

Belongs to the peptidase S1C family.

Its subcellular location is the plastid. It localises to the chloroplast thylakoid lumen. Its function is as follows. Probable serine protease. The chain is Protease Do-like 5, chloroplastic (DEGP5) from Arabidopsis thaliana (Mouse-ear cress).